The chain runs to 319 residues: Olfactory receptor 51F1 (319 aa).

Residues 1–37 (MLQNQDTMEILSNSTSKFPTFLLTGIPGLESAHVWIS) are Extracellular-facing. The helical transmembrane segment at 38–58 (IPFCCFYAIALSGNSVILFVI) threads the bilayer. The Cytoplasmic segment spans residues 59–75 (ITQQSLHEPMYYFLFRL). A helical membrane pass occupies residues 76-96 (SATDLGLTVSSLSTTLGILWF). The Extracellular segment spans residues 97–106 (EAREISLYSC). A disulfide bond links cysteine 106 and cysteine 188. Residues 107 to 127 (IVQMFFLHGFTFMESGVLVAT) form a helical membrane-spanning segment. Residues 128-149 (AFDRYVAICDPLRYTTILTNSR) lie on the Cytoplasmic side of the membrane. A helical membrane pass occupies residues 150 to 170 (IIQMGLLMITRAIVLILPLLL). At 171-211 (LLKPLYFCRMNALSHSYCYHPDVIQLACSDIRANSICGLID) the chain is on the extracellular side. A helical transmembrane segment spans residues 212 to 232 (LILTTGIDTPCIVLSYILIIH). Residues 233–249 (SVLRIASPEEWHKVFST) are Cytoplasmic-facing. A helical membrane pass occupies residues 250–270 (CVSHVGAVAFFYIHMLSLSLV). Residues 271–279 (YRYGRSAPR) lie on the Extracellular side of the membrane. Residues 280–300 (VVHSVMANVYLLLPPVLNPII) form a helical membrane-spanning segment. At 301–319 (DSVKTKQIRKAMLSLLLTK) the chain is on the cytoplasmic side.

Belongs to the G-protein coupled receptor 1 family.

It is found in the cell membrane. Functionally, odorant receptor. In Homo sapiens (Human), this protein is Olfactory receptor 51F1 (OR51F1).